The chain runs to 168 residues: Transmembrane protein 229b (168 aa).

Over 1–14 (MAPPEPLTALSRWY) the chain is Cytoplasmic. The helical transmembrane segment at 15 to 35 (LYAIHGYFCEVMFTAAWDFVV) threads the bilayer. The Extracellular portion of the chain corresponds to 36–40 (NYNWK). A helical membrane pass occupies residues 41–61 (FPGVTSVWALFIYGTSILIVE). Over 62-72 (KMYLYLKDKCN) the chain is Cytoplasmic. A helical transmembrane segment spans residues 73–93 (ILIRCLIYTLWTYIWEFSTGL). The Extracellular portion of the chain corresponds to 94–109 (ILRQFNACPWDYSQFD). The chain crosses the membrane as a helical span at residues 110–130 (FDFMGLITLEYAIPWFCASFI). Residues 131–168 (MEQLVIRNTLRLRFDEHAEPGSPVMSTVSMANGHVKCN) are Cytoplasmic-facing.

Belongs to the TMEM229 family.

It is found in the membrane. In Xenopus tropicalis (Western clawed frog), this protein is Transmembrane protein 229b (tmem229b).